A 140-amino-acid chain; its full sequence is MTDYIKPYNNDPFVGHLATPINSSSLTRAYLSQLPIYRRGVSPFLRGLEIGMAHGYFLIGPFVQLGPLRNTDIKYLAGLLSAIGLIVILTLGMLLYGAVSFTNDSQDLESVDGWRQLASGFLLGAVGGAGFAYLLLTLFS.

3 helical membrane-spanning segments follow: residues 48 to 68, 79 to 99, and 119 to 139; these read LEIG…LGPL, LLSA…YGAV, and SGFL…LTLF.

This sequence belongs to the PsaL family.

The protein resides in the plastid. It localises to the chloroplast thylakoid membrane. The protein is Photosystem I reaction center subunit XI of Cyanidioschyzon merolae (strain NIES-3377 / 10D) (Unicellular red alga).